The following is a 622-amino-acid chain: Zinc finger protein ZIC 5 (622 aa).

Disordered stretches follow at residues 50–171 (MHLH…KGHS), 190–223 (HGAP…SASG), 232–251 (GSAL…GHPL), and 321–349 (PGPH…HLPG). Positions 126-151 (APPPPAPPLPPSQSSSPPPPPPPPPA) are enriched in pro residues. The span at 329–340 (APPPAPPPAPAP) shows a compositional bias: pro residues. Residues 422-444 (EDCPREGKPFKAKYKLINHIRVH) form a C2H2-type 1; degenerate zinc finger. 3 consecutive C2H2-type zinc fingers follow at residues 450 to 474 (FPCP…KRTH), 480 to 504 (FKCE…SHVH), and 510 to 534 (YYCK…MKIH). Disordered regions lie at residues 531-573 (MKIH…STLS) and 590-622 (APSH…RTIH). 3 positions are modified to phosphoserine: serine 537, serine 541, and serine 559. Polar residues predominate over residues 595–604 (HTPSSNGTTS).

Belongs to the GLI C2H2-type zinc-finger protein family.

It is found in the nucleus. Essential for neural crest development, converting cells from an epidermal fate to a neural crest cell fate. Binds to DNA. This Mus musculus (Mouse) protein is Zinc finger protein ZIC 5 (Zic5).